The following is a 600-amino-acid chain: MHGTATNPYRTHTAGELRASNVGQRVRLAGWVHRRRDHGGLIFVDLRDRWGITQVTFDPERGEVFSAAERLRPEWSVSVEGEVVRRPEGNENPELPTGEIEVEASSLRVLNASETPPFEIDRERPVDELTRLRYRYLDLRRERMRENILFRDRVVRYIRRYLAERDFVEVETPLLTKSTPEGARDYLVPSRLYPGQFYALPQSPQQFKQLLMVAGLERYFQIARALRDEDQRGDRQPEHTQLDLEMSYTTQDEVLQLIEGLYTEIVERLTEKRVLFKPFPRLTYAEAMERFGSDKPDLRFGLELRDVSDLARSSEFKVFRNAVEAGGSVRGLAAGGLGDLSRRELDGLTEVAREGGARGLAHLRAEGKALKGPVAKFFSAEEQAALREALGARPGDWMFFVADRDPVVFESLNRLRLHLRDRLGLADRDALAFCWITDFPLFEYNEEEGRIEPMHHMFTMPREEDIPLLDTDPLAVTGQLYDLVANGVELASGSIRIHRPDLQQKVFSIIGIDEEEAERRFGTLLRAFRYGAPPHGGIAPGIDRLVMLLRDEPNIREVMAFPKTQAARDEMMDAPSPVSEEQLRELHISLCLPPEERRNP.

Residue Glu181 participates in L-aspartate binding. Positions Gln205–Lys208 are aspartate. Residue Arg227 participates in L-aspartate binding. ATP is bound by residues Arg227–Glu229 and Gln236. An L-aspartate-binding site is contributed by His455. ATP is bound at residue Glu489. Arg496 lines the L-aspartate pocket. Position 541–544 (Gly541–Arg544) interacts with ATP.

Belongs to the class-II aminoacyl-tRNA synthetase family. Type 1 subfamily. As to quaternary structure, homodimer.

The protein resides in the cytoplasm. It carries out the reaction tRNA(Asx) + L-aspartate + ATP = L-aspartyl-tRNA(Asx) + AMP + diphosphate. Its function is as follows. Aspartyl-tRNA synthetase with relaxed tRNA specificity since it is able to aspartylate not only its cognate tRNA(Asp) but also tRNA(Asn). Reaction proceeds in two steps: L-aspartate is first activated by ATP to form Asp-AMP and then transferred to the acceptor end of tRNA(Asp/Asn). In Rubrobacter xylanophilus (strain DSM 9941 / JCM 11954 / NBRC 16129 / PRD-1), this protein is Aspartate--tRNA(Asp/Asn) ligase.